We begin with the raw amino-acid sequence, 183 residues long: Translation initiation factor IF-3 (183 aa).

Positions 1 to 13 (MKQPDRNQQQGAK) are enriched in polar residues. The disordered stretch occupies residues 1-24 (MKQPDRNQQQGAKSNRPAINDEIR).

Belongs to the IF-3 family. Monomer.

It is found in the cytoplasm. Functionally, IF-3 binds to the 30S ribosomal subunit and shifts the equilibrium between 70S ribosomes and their 50S and 30S subunits in favor of the free subunits, thus enhancing the availability of 30S subunits on which protein synthesis initiation begins. In Acinetobacter baylyi (strain ATCC 33305 / BD413 / ADP1), this protein is Translation initiation factor IF-3.